Consider the following 212-residue polypeptide: 3-isopropylmalate dehydratase small subunit (212 aa).

It belongs to the LeuD family. LeuD type 1 subfamily. As to quaternary structure, heterodimer of LeuC and LeuD.

The enzyme catalyses (2R,3S)-3-isopropylmalate = (2S)-2-isopropylmalate. It functions in the pathway amino-acid biosynthesis; L-leucine biosynthesis; L-leucine from 3-methyl-2-oxobutanoate: step 2/4. Functionally, catalyzes the isomerization between 2-isopropylmalate and 3-isopropylmalate, via the formation of 2-isopropylmaleate. The protein is 3-isopropylmalate dehydratase small subunit of Thioalkalivibrio sulfidiphilus (strain HL-EbGR7).